Consider the following 486-residue polypeptide: dTDP-4-dehydro-6-deoxy-alpha-D-glucopyranose 2,3-dehydratase (486 aa).

DTDP-4-dehydro-6-deoxy-alpha-D-glucose is bound by residues Trp66, 149–153, Ser187, Trp304, Arg367, 383–385, 388–389, and 421–424; these read TRSNY, QCS, NY, and EGGR.

This sequence belongs to the hexose 2,3-dehydratase family. Homodimer.

It carries out the reaction dTDP-4-dehydro-6-deoxy-alpha-D-glucose = dTDP-3,4-didehydro-2,6-dideoxy-alpha-D-glucose + H2O. Functionally, involved in the biosynthesis of forosamine ((4-dimethylamino)-2,3,4,6-tetradeoxy-alpha-D-threo-hexopyranose), a highly deoxygenated sugar component of several bioactive natural products such as the insecticidal spinosyns A and D. Catalyzes the removal of the hydroxyl group at position C-2 of the hexose ring of dTDP-4-dehydro-6-deoxy-alpha-D-glucopyranose, and the oxidation of the hydroxyl group at position C-3 to form a carbonyl functionality. The product of the reaction, dTDP-2,6-dideoxy-D-glycero-hex-2-enos-4-ulose, is a highly unstable diketosugar, which spontaneously forms dTDP-3,4-didehydro-2,6-dideoxy-alpha-D-glucose. This chain is dTDP-4-dehydro-6-deoxy-alpha-D-glucopyranose 2,3-dehydratase, found in Saccharopolyspora spinosa.